A 354-amino-acid chain; its full sequence is Protein-glutamate methylesterase/protein-glutamine glutaminase 2 (354 aa).

The 118-residue stretch at 3–120 (RVVVVDDSMS…PADLADYARD (118 aa)) folds into the Response regulatory domain. Position 54 is a 4-aspartylphosphate (Asp-54). The CheB-type methylesterase domain occupies 164–354 (ATRLSRVIAI…MGARLSEALQ (191 aa)). Residues Ser-176, His-202, and Asp-298 contribute to the active site.

Belongs to the CheB family. Post-translationally, phosphorylated by CheA. Phosphorylation of the N-terminal regulatory domain activates the methylesterase activity.

The protein resides in the cytoplasm. The enzyme catalyses [protein]-L-glutamate 5-O-methyl ester + H2O = L-glutamyl-[protein] + methanol + H(+). It carries out the reaction L-glutaminyl-[protein] + H2O = L-glutamyl-[protein] + NH4(+). Its function is as follows. Involved in chemotaxis. Part of a chemotaxis signal transduction system that modulates chemotaxis in response to various stimuli. Catalyzes the demethylation of specific methylglutamate residues introduced into the chemoreceptors (methyl-accepting chemotaxis proteins or MCP) by CheR. Also mediates the irreversible deamidation of specific glutamine residues to glutamic acid. The polypeptide is Protein-glutamate methylesterase/protein-glutamine glutaminase 2 (Burkholderia thailandensis (strain ATCC 700388 / DSM 13276 / CCUG 48851 / CIP 106301 / E264)).